The following is a 340-amino-acid chain: Anthranilate phosphoribosyltransferase (340 aa).

Residues Gly81, 84 to 85 (GD), Thr89, 91 to 94 (NIST), 109 to 117 (KHGNRNLSS), and Ala121 contribute to the 5-phospho-alpha-D-ribose 1-diphosphate site. Gly81 contributes to the anthranilate binding site. Ser93 contributes to the Mg(2+) binding site. Position 112 (Asn112) interacts with anthranilate. Arg167 contributes to the anthranilate binding site. 2 residues coordinate Mg(2+): Asp226 and Glu227.

Belongs to the anthranilate phosphoribosyltransferase family. As to quaternary structure, homodimer. Mg(2+) is required as a cofactor.

The catalysed reaction is N-(5-phospho-beta-D-ribosyl)anthranilate + diphosphate = 5-phospho-alpha-D-ribose 1-diphosphate + anthranilate. The protein operates within amino-acid biosynthesis; L-tryptophan biosynthesis; L-tryptophan from chorismate: step 2/5. Functionally, catalyzes the transfer of the phosphoribosyl group of 5-phosphorylribose-1-pyrophosphate (PRPP) to anthranilate to yield N-(5'-phosphoribosyl)-anthranilate (PRA). The polypeptide is Anthranilate phosphoribosyltransferase (Ruegeria sp. (strain TM1040) (Silicibacter sp.)).